A 324-amino-acid chain; its full sequence is Cytochrome f (324 aa).

A signal peptide spans 1–30 (MNMRFSPKALVRQLGRLSLVACLSLGLLGA). Positions 42, 62, 65, and 66 each coordinate heme. The helical transmembrane segment at 290-310 (VLGVIAFFFAVMLAQIMLVLK) threads the bilayer.

This sequence belongs to the cytochrome f family. As to quaternary structure, the 4 large subunits of the cytochrome b6-f complex are cytochrome b6, subunit IV (17 kDa polypeptide, PetD), cytochrome f and the Rieske protein, while the 4 small subunits are PetG, PetL, PetM and PetN. The complex functions as a dimer. Heme serves as cofactor.

The protein resides in the cellular thylakoid membrane. Component of the cytochrome b6-f complex, which mediates electron transfer between photosystem II (PSII) and photosystem I (PSI), cyclic electron flow around PSI, and state transitions. The chain is Cytochrome f from Synechococcus elongatus (strain ATCC 33912 / PCC 7942 / FACHB-805) (Anacystis nidulans R2).